The primary structure comprises 222 residues: MRSPIMQTGLDFTLVEDLVAGVDEVGRGPLCGAVVTAAVILDPARPILGLNDSKKLTEARREKLYVEIQEKALCWFIARAEVEEIDQLNILHATMLAMKRAVEGLSITPKLALIDGNRCPQLSVPSAPVVKGDSRVPAIAAASILAKVSRDREMAAFELIYPGYGIGGHKGYPTPVHLEALARLGPTPIHRRSFAPVRAAHEARASIMIGGSIPLPVGLLQD.

The region spanning 17–206 (DLVAGVDEVG…VRAAHEARAS (190 aa)) is the RNase H type-2 domain. Residues Asp23, Glu24, and Asp115 each coordinate a divalent metal cation.

It belongs to the RNase HII family. Mn(2+) is required as a cofactor. Requires Mg(2+) as cofactor.

The protein localises to the cytoplasm. It carries out the reaction Endonucleolytic cleavage to 5'-phosphomonoester.. Its function is as follows. Endonuclease that specifically degrades the RNA of RNA-DNA hybrids. This chain is Ribonuclease HII, found in Pseudomonas savastanoi pv. phaseolicola (strain 1448A / Race 6) (Pseudomonas syringae pv. phaseolicola (strain 1448A / Race 6)).